We begin with the raw amino-acid sequence, 253 residues long: Complement C1q subcomponent subunit B (253 aa).

Residues 1 to 25 (MKTQWGEVWTHLLLLLLGFLHVSWA) form the signal peptide. Glutamine 26 is subject to Pyrrolidone carboxylic acid. The 84-residue stretch at 29–112 (CTGPPGIPGI…GPRGPKGDSG (84 aa)) folds into the Collagen-like domain. 5 positions are modified to 4-hydroxyproline: proline 33, proline 36, proline 39, proline 51, and proline 54. The tract at residues 35-115 (IPGIPGVPGV…GPKGDSGDYG (81 aa)) is disordered. Residues lysine 57 and lysine 60 each carry the 5-hydroxylysine modification. A 4-hydroxyproline modification is found at proline 63. The residue at position 75 (lysine 75) is a 5-hydroxylysine. The span at 78–96 (PGIPGTPGKVGPKGPVGPK) shows a compositional bias: low complexity. 4-hydroxyproline occurs at positions 81 and 84. 2 positions are modified to 5-hydroxylysine: lysine 90 and lysine 96. Proline 99 is modified (4-hydroxyproline). The residue at position 108 (lysine 108) is a 5-hydroxylysine. Residues 115–253 (GATQKVAFSA…GFLLFPDMDA (139 aa)) form the C1q domain. Residues cysteine 179 and cysteine 198 are joined by a disulfide bond. Residues aspartate 199, tyrosine 200, and glutamine 206 each coordinate Ca(2+).

Core component of the complement C1 complex, a calcium-dependent complex composed of 1 molecule of the C1Q subcomplex, 2 molecules of C1R and 2 molecules of C1S. The C1Q subcomplex is composed 18 subunits: 3 chains of C1QA, C1QB, and C1QC trimerize to form 6 collagen-like triple helices connected to six globular ligand-recognition modules (C1q domain). In terms of processing, hydroxylated on lysine and proline residues. Hydroxylated lysine residues can be glycosylated. Mouse C1Q contains up to 64.0 hydroxylysine-galactosylglucose residues. Total percentage hydroxylysine residues glycosylated is 95.1%. Contains no hydroxylysine-monosaccharides. In terms of tissue distribution, highest expression in thioglycolate-activated peritoneal macrophages. Also found in spleen, thymus and heart. Very weak expression liver, kidney, lung and intestine.

It localises to the secreted. Its subcellular location is the cell surface. With respect to regulation, the C1Q subcomplex is inhibited by sulfated molecules, such as triterpenoid sulfates, heparan sulfate, or chondroitin sulfates. Core component of the complement C1 complex, a multiprotein complex that initiates the classical pathway of the complement system, a cascade of proteins that leads to phagocytosis and breakdown of pathogens and signaling that strengthens the adaptive immune system. The classical complement pathway is initiated by the C1Q subcomplex of the C1 complex, which specifically binds IgG or IgM immunoglobulins complexed with antigens, forming antigen-antibody complexes on the surface of pathogens: C1QA, together with C1QB and C1QC, specifically recognizes and binds the Fc regions of IgG or IgM via its C1q domain. Immunoglobulin-binding activates the proenzyme C1R, which cleaves C1S, initiating the proteolytic cascade of the complement system. The C1Q subcomplex is activated by a hexamer of IgG complexed with antigens, while it is activated by a pentameric IgM. The C1Q subcomplex also recognizes and binds phosphatidylserine exposed on the surface of cells undergoing programmed cell death, possibly promoting activation of the complement system. The protein is Complement C1q subcomponent subunit B of Mus musculus (Mouse).